Reading from the N-terminus, the 525-residue chain is MAVPGEAEEEATVYLVVSGIPSVLRSAHLRSYFSQFREERGGGFLCFHYRHRPERAPPQAAPNSALIPTDPAAEGQLLSQTSATDVRPLSTRDSTPIQTRTCCCVISVRGLAQAQRLIRMYSGRRWLDSHGTWLPGRCLIRRLRLPTEASGLGSFPFKTRKELQSWKAENEAFTLADLKQLPELNPPVLMPRGNVGTPLRVFLELIRACRLPPRIITQLQLQFPKTGSSRRYGNVPFEYEDSETVEQEELVYTAEGEEIPQGTYLADIPASPCGEPEEEVGKEEEEESHSDEDDDRGEEWERHEALHEDVTGQERTTEQLFEEEIELKWEKGGSGLVFYTDAQFWQEEEGDFDEQTADDWDVDMSVYYDRDGGDKDARDSVQMRLEQRLRDGQEDGSVIERQVGTFERHTKGIGRKVMERQGWAEGQGLGCRCSGVPEALDSDGQHPRCKRGLGYHGEKLQPFGQLKRPRRNGLGLISTIYDEPLPQDQTESLLRRQPPTSMKFRTDMAFVRGSSCASDSPSLPD.

A disordered region spans residues 264–316 (YLADIPASPCGEPEEEVGKEEEEESHSDEDDDRGEEWERHEALHEDVTGQERT). The span at 275-298 (EPEEEVGKEEEEESHSDEDDDRGE) shows a compositional bias: acidic residues. Residues 299–316 (EWERHEALHEDVTGQERT) show a composition bias toward basic and acidic residues. Positions 410-458 (TKGIGRKVMERQGWAEGQGLGCRCSGVPEALDSDGQHPRCKRGLGYHGE) constitute a G-patch domain.

Interacts with mitochondrial MAVS; the interaction is markedly increased upon viral infection. As to expression, expressed in ocular tissues including retinal pigment epithelium, cornea, ciliary muscle and non-pigmented ciliary epithelium. Also expressed in optic nerve, cartilage, skin and lymph node.

Its subcellular location is the nucleus. The protein resides in the cytoplasm. In terms of biological role, involved in transcriptional regulation. It is able to activate transcription from the CXCR4 promoter and therefore it might control neural crest cell migration involved in ocular and craniofacial development. Is a negative regulator of immune antiviral response, acting via down-regulation of RIG-I-like receptors signaling and inhibition of type I interferon production. The control mechanism involves interaction with mitochondrial MAVS and inhibition of MAVS assembly with downstream proteins implicated in antiviral response, such as TBK1 and TRAF6. This chain is G patch domain-containing protein 3 (GPATCH3), found in Homo sapiens (Human).